The primary structure comprises 152 residues: CASP-like protein 5B3 (152 aa).

Topologically, residues 1–21 are cytoplasmic; the sequence is MIDIPGTPGTLTGLVLRISQC. 2 consecutive transmembrane segments (helical) span residues 22-42 and 43-63; these read VFAAGSISYMVTSGGFFSFTA and FCYLIAAMGLQVIWSFGLAIL. The Extracellular segment spans residues 64 to 77; the sequence is DTFALVRKKTLLSP. A helical transmembrane segment spans residues 78–98; sequence VLVSLFVVGDWVTSTLSLAGA. Residues 99–127 are Cytoplasmic-facing; it reads SSSAGITVLYFGDLGSCSFEAECWKYQLS. Residues 128–148 form a helical membrane-spanning segment; it reads VALAFLCWITIAVSSLTTLWL. Residues 149-152 lie on the Extracellular side of the membrane; sequence LASA.

Belongs to the Casparian strip membrane proteins (CASP) family. In terms of assembly, homodimer and heterodimers. As to expression, expressed in the stele of the root and in leaves.

It localises to the cell membrane. The sequence is that of CASP-like protein 5B3 from Arabidopsis thaliana (Mouse-ear cress).